We begin with the raw amino-acid sequence, 361 residues long: Dynein axonemal assembly factor 8 (361 aa).

Disordered regions lie at residues 65 to 191 and 309 to 334; these read DPAG…ERRK and AQPG…RRPL. Over residues 136–157 the composition is skewed to polar residues; that stretch reads TLNTSASQSPRQGPQGEATRSP. Residues Ser-142 and Ser-144 each carry the phosphoserine modification. Over residues 321-334 the composition is skewed to low complexity; the sequence is GSSSSSGHLGRRPL.

It is found in the dynein axonemal particle. It localises to the cytoplasm. In terms of biological role, in cyliated cells, dynein axonemal particle-specific protein required for deployment of ODA to the axoneme. Interacts with outer dynein arm (ODA) subunits. The protein is Dynein axonemal assembly factor 8 (DNAAF8) of Bos taurus (Bovine).